The sequence spans 354 residues: Glycerol-1-phosphate dehydrogenase [NAD(P)+] (354 aa).

NAD(+) contacts are provided by residues 102 to 106 (GRSID) and 124 to 127 (TAAS). Position 129 (aspartate 129) interacts with substrate. Serine 133 provides a ligand contact to NAD(+). Aspartate 176 contacts substrate. Zn(2+) is bound by residues aspartate 176 and histidine 256. Histidine 260 contributes to the substrate binding site. Histidine 272 provides a ligand contact to Zn(2+).

The protein belongs to the glycerol-1-phosphate dehydrogenase family. The cofactor is Zn(2+).

The protein resides in the cytoplasm. It carries out the reaction sn-glycerol 1-phosphate + NAD(+) = dihydroxyacetone phosphate + NADH + H(+). It catalyses the reaction sn-glycerol 1-phosphate + NADP(+) = dihydroxyacetone phosphate + NADPH + H(+). It participates in membrane lipid metabolism; glycerophospholipid metabolism. Functionally, catalyzes the NAD(P)H-dependent reduction of dihydroxyacetonephosphate (DHAP or glycerone phosphate) to glycerol 1-phosphate (G1P). The G1P thus generated is used as the glycerophosphate backbone of phospholipids in the cellular membranes of Archaea. This Methanothrix thermoacetophila (strain DSM 6194 / JCM 14653 / NBRC 101360 / PT) (Methanosaeta thermophila) protein is Glycerol-1-phosphate dehydrogenase [NAD(P)+].